Consider the following 551-residue polypeptide: Dihydroxy-acid dehydratase (551 aa).

D78 is a Mg(2+) binding site. Residue C119 participates in [2Fe-2S] cluster binding. Mg(2+) contacts are provided by D120 and K121. At K121 the chain carries N6-carboxylysine. Position 191 (C191) interacts with [2Fe-2S] cluster. E441 provides a ligand contact to Mg(2+). Residue S467 is the Proton acceptor of the active site.

This sequence belongs to the IlvD/Edd family. Homodimer. The cofactor is [2Fe-2S] cluster. Mg(2+) serves as cofactor.

It catalyses the reaction (2R)-2,3-dihydroxy-3-methylbutanoate = 3-methyl-2-oxobutanoate + H2O. The enzyme catalyses (2R,3R)-2,3-dihydroxy-3-methylpentanoate = (S)-3-methyl-2-oxopentanoate + H2O. Its pathway is amino-acid biosynthesis; L-isoleucine biosynthesis; L-isoleucine from 2-oxobutanoate: step 3/4. The protein operates within amino-acid biosynthesis; L-valine biosynthesis; L-valine from pyruvate: step 3/4. Functions in the biosynthesis of branched-chain amino acids. Catalyzes the dehydration of (2R,3R)-2,3-dihydroxy-3-methylpentanoate (2,3-dihydroxy-3-methylvalerate) into 2-oxo-3-methylpentanoate (2-oxo-3-methylvalerate) and of (2R)-2,3-dihydroxy-3-methylbutanoate (2,3-dihydroxyisovalerate) into 2-oxo-3-methylbutanoate (2-oxoisovalerate), the penultimate precursor to L-isoleucine and L-valine, respectively. The sequence is that of Dihydroxy-acid dehydratase from Pyrococcus abyssi (strain GE5 / Orsay).